Here is a 546-residue protein sequence, read N- to C-terminus: Arginine--tRNA ligase (546 aa).

A 'HIGH' region motif is present at residues 122 to 132 (ANPTGPFTVGH).

This sequence belongs to the class-I aminoacyl-tRNA synthetase family. Monomer.

The protein localises to the cytoplasm. It catalyses the reaction tRNA(Arg) + L-arginine + ATP = L-arginyl-tRNA(Arg) + AMP + diphosphate. In Thermotoga petrophila (strain ATCC BAA-488 / DSM 13995 / JCM 10881 / RKU-1), this protein is Arginine--tRNA ligase.